Consider the following 548-residue polypeptide: MALHVPKAPGFAQMLKEGAKHFSGLEEAVYRNIQACKELAQTTRTAYGPNGMNKMVINHLEKLFVTNDAATILRELEVQHPAAKMIVMASHMQEQEVGDGTNFVLVFAGALLELAEELLRIGLSVSEVIEGYEIACRKAHEILPNLVCCSAKNLRDVDEVSSLLRTSIMSKQYGNEVFLAKLIAQACVSIFPDSGHFNVDNIRVCKILGSGISSSSVLHGMVFKKETEGDVTSVKDAKIAVYSCPFDGTITETKGTVLIKTAEELMNFSKGEENLMDAQVKAIADTGANVVVTGGKVADMALHYANKYNIMLVRLNSKWDLRRLCKTVGATALPRLTPPVLEEMGHCDSVCLSEVGDTQVVVFKHEKEDGAISTIVLRGSTDNLMDDIERAVDDGVNTFKVLTRDKRLVPGGGATEIELAKQITSYGETCPGLEQYAIKKFAEAFEAIPRALAENSGVKANEVISKLYAVHQEGNKNVGLDIEAEVPAVKDMLEAGILDTYLGKYWAIKLATNAAVTVLRVDQIIMAKPAGGPKPPSGKKDWDDDQND.

The residue at position 2 (alanine 2) is an N-acetylalanine. The residue at position 23 (serine 23) is a Phosphoserine. A Phosphotyrosine modification is found at tyrosine 30. Residues tyrosine 47 and glycine 48 each coordinate ADP. Aspartate 99 lines the Mg(2+) pocket. Positions 100, 101, 102, and 103 each coordinate ADP. The ATP site is built by glycine 100, threonine 101, and asparagine 102. Position 162 is a phosphoserine (serine 162). Positions 169, 170, and 171 each coordinate ADP. Residues serine 170 and lysine 171 each coordinate ATP. Phosphoserine is present on serine 213. Glycyl lysine isopeptide (Lys-Gly) (interchain with G-Cter in SUMO2) cross-links involve residues lysine 224, lysine 254, and lysine 260. 2 positions are modified to phosphoserine: serine 269 and serine 317. 2 positions are modified to N6-acetyllysine: lysine 318 and lysine 400. Position 412 (glycine 412) interacts with ADP. Glycine 412 contacts ATP. Residue lysine 459 forms a Glycyl lysine isopeptide (Lys-Gly) (interchain with G-Cter in SUMO1) linkage. Lysine 466 carries the post-translational modification N6-acetyllysine. Aspartate 499 contacts ADP. Aspartate 499 and lysine 504 together coordinate ATP. Tyrosine 505 is subject to Phosphotyrosine. A disordered region spans residues 529-548; the sequence is PAGGPKPPSGKKDWDDDQND. Residue lysine 534 forms a Glycyl lysine isopeptide (Lys-Gly) (interchain with G-Cter in SUMO2) linkage. Serine 537 carries the phosphoserine modification. A Glycyl lysine isopeptide (Lys-Gly) (interchain with G-Cter in SUMO2) cross-link involves residue lysine 539.

This sequence belongs to the TCP-1 chaperonin family. In terms of assembly, component of the chaperonin-containing T-complex (TRiC), a hexadecamer composed of two identical back-to-back stacked rings enclosing a protein folding chamber. Each ring is made up of eight different subunits: TCP1/CCT1, CCT2, CCT3, CCT4, CCT5, CCT6A/CCT6, CCT7, CCT8. Interacts with PACRG. Interacts with DNAAF4. Interacts with synaptic plasticity regulator PANTS.

It localises to the cytoplasm. Its subcellular location is the cytoskeleton. The protein resides in the microtubule organizing center. It is found in the centrosome. The protein localises to the cilium basal body. It catalyses the reaction ATP + H2O = ADP + phosphate + H(+). In terms of biological role, component of the chaperonin-containing T-complex (TRiC), a molecular chaperone complex that assists the folding of actin, tubulin and other proteins upon ATP hydrolysis. The TRiC complex mediates the folding of WRAP53/TCAB1, thereby regulating telomere maintenance. As part of the TRiC complex may play a role in the assembly of BBSome, a complex involved in ciliogenesis regulating transports vesicles to the cilia. This chain is T-complex protein 1 subunit theta (CCT8), found in Macaca fascicularis (Crab-eating macaque).